Reading from the N-terminus, the 235-residue chain is Phosphoribosylaminoimidazole-succinocarboxamide synthase (235 aa).

The protein belongs to the SAICAR synthetase family.

It carries out the reaction 5-amino-1-(5-phospho-D-ribosyl)imidazole-4-carboxylate + L-aspartate + ATP = (2S)-2-[5-amino-1-(5-phospho-beta-D-ribosyl)imidazole-4-carboxamido]succinate + ADP + phosphate + 2 H(+). The protein operates within purine metabolism; IMP biosynthesis via de novo pathway; 5-amino-1-(5-phospho-D-ribosyl)imidazole-4-carboxamide from 5-amino-1-(5-phospho-D-ribosyl)imidazole-4-carboxylate: step 1/2. This Caldanaerobacter subterraneus subsp. tengcongensis (strain DSM 15242 / JCM 11007 / NBRC 100824 / MB4) (Thermoanaerobacter tengcongensis) protein is Phosphoribosylaminoimidazole-succinocarboxamide synthase.